The sequence spans 692 residues: Follicle-stimulating hormone receptor (692 aa).

The N-terminal stretch at 1 to 17 (MALLLVSLLAFLGTGSG) is a signal peptide. Disulfide bonds link cysteine 18/cysteine 25 and cysteine 23/cysteine 32. The region spanning 18-46 (CHHWLCHCSNRVFLCQDSKVTEIPTDLPR) is the LRRNT domain. Residues 18–365 (CHHWLCHCSN…EDIMGYNILR (348 aa)) are Extracellular-facing. LRR repeat units follow at residues 49-72 (IELR…FGDL), 73-97 (EKIE…LPKL), 98-118 (HEIR…AFQN), 119-143 (LPSL…KIQS), 144-169 (LQKV…MGLS), 170-192 (FESV…AFNG), 193-216 (TQLD…VFQG), 217-240 (ASGP…GLEN), and 241-259 (LKKL…PNLD). N-linked (GlcNAc...) asparagine glycans are attached at residues asparagine 191 and asparagine 199. Disulfide bonds link cysteine 275/cysteine 345, cysteine 276/cysteine 292, cysteine 276/cysteine 355, and cysteine 292/cysteine 337. N-linked (GlcNAc...) asparagine glycosylation occurs at asparagine 293. Tyrosine 334 bears the Sulfotyrosine mark. The helical transmembrane segment at 366-386 (VLIWFISILAITGNTTVLVVL) threads the bilayer. Residues 387 to 397 (TTSQYKLTVPR) are Cytoplasmic-facing. A helical membrane pass occupies residues 398 to 420 (FLMCNLAFADLCIGIYLLLIASV). Residues 421 to 442 (DIHTKSQYHNYAIDWQTGAGCD) are Extracellular-facing. Cysteine 441 and cysteine 516 form a disulfide bridge. Residues 443 to 464 (AAGFFTVFASELSVYTLTAITL) form a helical membrane-spanning segment. At 465–484 (ERWHTITHAMQLECKVQLRH) the chain is on the cytoplasmic side. A helical transmembrane segment spans residues 485–507 (AASVMVLGWTFAFAAALFPIFGI). Over 508–527 (SSYMKVSICLPMDIDSPLSQ) the chain is Extracellular. The helical transmembrane segment at 528-549 (LYVMALLVLNVLAFVVICGCYT) threads the bilayer. Residues 550-572 (HIYLTVRNPTIVSSSSDTKIAKR) lie on the Cytoplasmic side of the membrane. The chain crosses the membrane as a helical span at residues 573 to 596 (MATLIFTDFLCMAPISFFAISASL). The Extracellular segment spans residues 597-607 (KVPLITVSKAK). Residues 608-629 (ILLVLFYPINSCANPFLYAIFT) traverse the membrane as a helical segment. Over 630–692 (KNFRRDFFIL…LVPLNHSSQN (63 aa)) the chain is Cytoplasmic.

The protein belongs to the G-protein coupled receptor 1 family. FSH/LSH/TSH subfamily. In terms of assembly, homotrimer. Functions as a homotrimer binding the FSH hormone heterodimer composed of CGA and FSHB. Interacts with ARRB2. Interacts with APPL2; interaction is independent of follicle stimulating hormone stimulation. N-glycosylated; indirectly required for FSH-binding, possibly via a conformational change that allows high affinity binding of hormone. Post-translationally, sulfated. Sertoli cells and ovarian granulosa cells.

Its subcellular location is the cell membrane. G protein-coupled receptor for follitropin, the follicle-stimulating hormone. Through cAMP production activates the downstream PI3K-AKT and ERK1/ERK2 signaling pathways. This chain is Follicle-stimulating hormone receptor (Fshr), found in Rattus norvegicus (Rat).